A 750-amino-acid polypeptide reads, in one-letter code: Photosystem I P700 chlorophyll a apoprotein A1 (750 aa).

A run of 8 helical transmembrane segments spans residues V70 to A93, L156 to H179, L195 to L219, I291 to Y309, W346 to Y369, L385 to V411, A433 to H455, and F531 to L549. [4Fe-4S] cluster contacts are provided by C573 and C582. 2 helical membrane passes run H589–W610 and L664–F686. H675 lines the chlorophyll a' pocket. Residues M683 and Y691 each contribute to the chlorophyll a site. W692 is a binding site for phylloquinone. The helical transmembrane segment at A724–A744 threads the bilayer.

The protein belongs to the PsaA/PsaB family. As to quaternary structure, the PsaA/B heterodimer binds the P700 chlorophyll special pair and subsequent electron acceptors. PSI consists of a core antenna complex that captures photons, and an electron transfer chain that converts photonic excitation into a charge separation. The eukaryotic PSI reaction center is composed of at least 11 subunits. Requires P700 is a chlorophyll a/chlorophyll a' dimer, A0 is one or more chlorophyll a, A1 is one or both phylloquinones and FX is a shared 4Fe-4S iron-sulfur center. as cofactor.

The protein resides in the plastid. It localises to the chloroplast thylakoid membrane. The enzyme catalyses reduced [plastocyanin] + hnu + oxidized [2Fe-2S]-[ferredoxin] = oxidized [plastocyanin] + reduced [2Fe-2S]-[ferredoxin]. PsaA and PsaB bind P700, the primary electron donor of photosystem I (PSI), as well as the electron acceptors A0, A1 and FX. PSI is a plastocyanin-ferredoxin oxidoreductase, converting photonic excitation into a charge separation, which transfers an electron from the donor P700 chlorophyll pair to the spectroscopically characterized acceptors A0, A1, FX, FA and FB in turn. Oxidized P700 is reduced on the lumenal side of the thylakoid membrane by plastocyanin. The polypeptide is Photosystem I P700 chlorophyll a apoprotein A1 (Cucumis sativus (Cucumber)).